The primary structure comprises 227 residues: 7-cyano-7-deazaguanine synthase (227 aa).

9 to 19 (LSGGLDSATVL) lines the ATP pocket. Zn(2+) is bound by residues cysteine 189, cysteine 199, cysteine 202, and cysteine 205.

It belongs to the QueC family. Zn(2+) serves as cofactor.

The enzyme catalyses 7-carboxy-7-deazaguanine + NH4(+) + ATP = 7-cyano-7-deazaguanine + ADP + phosphate + H2O + H(+). Its pathway is purine metabolism; 7-cyano-7-deazaguanine biosynthesis. Catalyzes the ATP-dependent conversion of 7-carboxy-7-deazaguanine (CDG) to 7-cyano-7-deazaguanine (preQ(0)). The chain is 7-cyano-7-deazaguanine synthase from Cupriavidus metallidurans (strain ATCC 43123 / DSM 2839 / NBRC 102507 / CH34) (Ralstonia metallidurans).